A 149-amino-acid polypeptide reads, in one-letter code: Deoxyuridine 5'-triphosphate nucleotidohydrolase (149 aa).

Substrate-binding positions include 68–70 (RSG), Asn-81, 85–87 (LID), and Met-95.

This sequence belongs to the dUTPase family. It depends on Mg(2+) as a cofactor.

It carries out the reaction dUTP + H2O = dUMP + diphosphate + H(+). Its pathway is pyrimidine metabolism; dUMP biosynthesis; dUMP from dCTP (dUTP route): step 2/2. This enzyme is involved in nucleotide metabolism: it produces dUMP, the immediate precursor of thymidine nucleotides and it decreases the intracellular concentration of dUTP so that uracil cannot be incorporated into DNA. The chain is Deoxyuridine 5'-triphosphate nucleotidohydrolase from Bordetella avium (strain 197N).